A 40-amino-acid polypeptide reads, in one-letter code: Photosystem II reaction center protein J (40 aa).

A helical membrane pass occupies residues 8 to 28; sequence IPLWIIGTVTGIPVIGLIGIF.

Belongs to the PsbJ family. PSII is composed of 1 copy each of membrane proteins PsbA, PsbB, PsbC, PsbD, PsbE, PsbF, PsbH, PsbI, PsbJ, PsbK, PsbL, PsbM, PsbT, PsbX, PsbY, PsbZ, Psb30/Ycf12, at least 3 peripheral proteins of the oxygen-evolving complex and a large number of cofactors. It forms dimeric complexes.

The protein localises to the plastid. It is found in the chloroplast thylakoid membrane. Functionally, one of the components of the core complex of photosystem II (PSII). PSII is a light-driven water:plastoquinone oxidoreductase that uses light energy to abstract electrons from H(2)O, generating O(2) and a proton gradient subsequently used for ATP formation. It consists of a core antenna complex that captures photons, and an electron transfer chain that converts photonic excitation into a charge separation. The polypeptide is Photosystem II reaction center protein J (Citrus sinensis (Sweet orange)).